A 760-amino-acid polypeptide reads, in one-letter code: Catecholate siderophore receptor Fiu (760 aa).

A signal peptide spans M1–A31. One can recognise a TBDR plug domain in the interval P67–K175. The TBDR beta-barrel domain maps to D180–F760. A TonB C-terminal box motif is present at residues R743–F760.

The protein belongs to the TonB-dependent receptor family.

Its subcellular location is the cell outer membrane. Involved in the active transport across the outer membrane of iron complexed with catecholate siderophores such as dihydroxybenzoylserine and dihydroxybenzoate. It derives its energy for transport by interacting with the trans-periplasmic membrane protein TonB. Can also transport catechol-substituted cephalosporins. Receptor for microcins M, H47 and E492. This chain is Catecholate siderophore receptor Fiu (fiu), found in Escherichia coli (strain UTI89 / UPEC).